The primary structure comprises 736 residues: Polyphosphate kinase (736 aa).

Position 91 (Asn91) interacts with ATP. Mg(2+)-binding residues include Arg421 and Arg451. The active-site Phosphohistidine intermediate is His481. Residues Tyr514, Arg610, and His638 each contribute to the ATP site.

It belongs to the polyphosphate kinase 1 (PPK1) family. Mg(2+) serves as cofactor. In terms of processing, an intermediate of this reaction is the autophosphorylated ppk in which a phosphate is covalently linked to a histidine residue through a N-P bond.

It catalyses the reaction [phosphate](n) + ATP = [phosphate](n+1) + ADP. Catalyzes the reversible transfer of the terminal phosphate of ATP to form a long-chain polyphosphate (polyP). This Pseudomonas syringae pv. tomato (strain ATCC BAA-871 / DC3000) protein is Polyphosphate kinase.